Reading from the N-terminus, the 264-residue chain is uncharacterized protein (264 aa).

4 helical membrane passes run 43 to 63, 68 to 88, 96 to 116, and 150 to 170; these read VVAAACTLPADSLFAVMLYLI, FLPSTLFIVNFSLVLLALLGI, ILPALVWKCVLLLFLLFLGCI, and LAAKYPMLPFIAVACTIVLAV. Residues 216-247 form a disordered region; sequence SYEDALKNSSQQPSTSSSSSSPPSRPPHSVYT. Residues 224–237 are compositionally biased toward low complexity; the sequence is SSQQPSTSSSSSSP.

Its subcellular location is the membrane. This is an uncharacterized protein from Caenorhabditis elegans.